The following is a 446-amino-acid chain: Amino-acid acetyltransferase (446 aa).

Residues 299 to 431 enclose the N-acetyltransferase domain; that stretch reads EQVRDAEIDD…SHLPMKKQKL (133 aa).

The protein belongs to the acetyltransferase family. ArgA subfamily.

It localises to the cytoplasm. It catalyses the reaction L-glutamate + acetyl-CoA = N-acetyl-L-glutamate + CoA + H(+). It functions in the pathway amino-acid biosynthesis; L-arginine biosynthesis; N(2)-acetyl-L-ornithine from L-glutamate: step 1/4. The sequence is that of Amino-acid acetyltransferase from Aliivibrio fischeri (strain MJ11) (Vibrio fischeri).